The following is a 502-amino-acid chain: Glycerol kinase (502 aa).

T14 contributes to the ADP binding site. Positions 14, 15, and 16 each coordinate ATP. T14 contributes to the sn-glycerol 3-phosphate binding site. R18 contacts ADP. Sn-glycerol 3-phosphate-binding residues include R84, E85, Y137, and D247. The glycerol site is built by R84, E85, Y137, D247, and Q248. ADP-binding residues include T269 and G312. ATP contacts are provided by T269, G312, Q316, and G413. ADP-binding residues include G413 and N417.

The protein belongs to the FGGY kinase family. Homotetramer and homodimer (in equilibrium). Heterodimer with EIIA-Glc. Binds 1 zinc ion per glycerol kinase EIIA-Glc dimer. The zinc ion is important for dimerization.

It carries out the reaction glycerol + ATP = sn-glycerol 3-phosphate + ADP + H(+). It participates in polyol metabolism; glycerol degradation via glycerol kinase pathway; sn-glycerol 3-phosphate from glycerol: step 1/1. Activity of this regulatory enzyme is affected by several metabolites. Allosterically and non-competitively inhibited by fructose 1,6-bisphosphate (FBP) and unphosphorylated phosphocarrier protein EIIA-Glc (III-Glc), an integral component of the bacterial phosphotransferase (PTS) system. Its function is as follows. Key enzyme in the regulation of glycerol uptake and metabolism. Catalyzes the phosphorylation of glycerol to yield sn-glycerol 3-phosphate. In Photorhabdus laumondii subsp. laumondii (strain DSM 15139 / CIP 105565 / TT01) (Photorhabdus luminescens subsp. laumondii), this protein is Glycerol kinase.